The following is a 474-amino-acid chain: UDP-N-acetylmuramate--L-alanine ligase (474 aa).

116-122 (GTHGKTT) contributes to the ATP binding site.

The protein belongs to the MurCDEF family.

It is found in the cytoplasm. It carries out the reaction UDP-N-acetyl-alpha-D-muramate + L-alanine + ATP = UDP-N-acetyl-alpha-D-muramoyl-L-alanine + ADP + phosphate + H(+). The protein operates within cell wall biogenesis; peptidoglycan biosynthesis. In terms of biological role, cell wall formation. The polypeptide is UDP-N-acetylmuramate--L-alanine ligase (Hyphomonas neptunium (strain ATCC 15444)).